A 138-amino-acid polypeptide reads, in one-letter code: Small ribosomal subunit protein bS16 (138 aa).

Residues 92–138 form a disordered region; that stretch reads QAAKREADAKQAAKEAAEAKAAAEAEAKAAAEAESADAGAEEAPAEA. Residues 94–122 are compositionally biased toward basic and acidic residues; that stretch reads AKREADAKQAAKEAAEAKAAAEAEAKAAA.

This sequence belongs to the bacterial ribosomal protein bS16 family.

The protein is Small ribosomal subunit protein bS16 of Synechococcus sp. (strain WH7803).